A 494-amino-acid polypeptide reads, in one-letter code: Probable cytosol aminopeptidase (494 aa).

Mn(2+) contacts are provided by Lys-260 and Asp-265. Lys-272 is an active-site residue. The Mn(2+) site is built by Asp-283, Asp-342, and Glu-344. Residue Arg-346 is part of the active site.

This sequence belongs to the peptidase M17 family. The cofactor is Mn(2+).

It is found in the cytoplasm. It carries out the reaction Release of an N-terminal amino acid, Xaa-|-Yaa-, in which Xaa is preferably Leu, but may be other amino acids including Pro although not Arg or Lys, and Yaa may be Pro. Amino acid amides and methyl esters are also readily hydrolyzed, but rates on arylamides are exceedingly low.. The catalysed reaction is Release of an N-terminal amino acid, preferentially leucine, but not glutamic or aspartic acids.. Functionally, presumably involved in the processing and regular turnover of intracellular proteins. Catalyzes the removal of unsubstituted N-terminal amino acids from various peptides. The polypeptide is Probable cytosol aminopeptidase (Bacillus anthracis (strain CDC 684 / NRRL 3495)).